The chain runs to 486 residues: ATP synthase subunit beta (486 aa).

An ATP-binding site is contributed by 164–171 (GGAGVGKT).

Belongs to the ATPase alpha/beta chains family. In terms of assembly, F-type ATPases have 2 components, CF(1) - the catalytic core - and CF(0) - the membrane proton channel. CF(1) has five subunits: alpha(3), beta(3), gamma(1), delta(1), epsilon(1). CF(0) has four main subunits: a(1), b(1), b'(1) and c(9-12).

Its subcellular location is the cellular thylakoid membrane. It carries out the reaction ATP + H2O + 4 H(+)(in) = ADP + phosphate + 5 H(+)(out). Functionally, produces ATP from ADP in the presence of a proton gradient across the membrane. The catalytic sites are hosted primarily by the beta subunits. This Prochlorococcus marinus (strain MIT 9312) protein is ATP synthase subunit beta.